A 130-amino-acid polypeptide reads, in one-letter code: EG45-like domain containing protein 2 (130 aa).

Residues methionine 1–alanine 25 form the signal peptide. Residues glycine 28–isoleucine 130 enclose the Expansin-like EG45 domain. Residue asparagine 106 is glycosylated (N-linked (GlcNAc...) asparagine).

As to expression, expressed in unstressed leaves.

The protein localises to the secreted. Its function is as follows. Plays a systemic role in water and solute homeostasis. The protein is EG45-like domain containing protein 2 (EGC2) of Arabidopsis thaliana (Mouse-ear cress).